Consider the following 257-residue polypeptide: 14-3-3-like protein A (257 aa).

The protein belongs to the 14-3-3 family.

The protein is 14-3-3-like protein A (GF14A) of Glycine max (Soybean).